The sequence spans 1301 residues: MKIITYFCIWAVAWAIPVPQSKPLERHVEKSMNLHLLARSNVSVQDELNASGTIKESGVLVHEGDRGRQENTQDGHKGEGNGSKWAEVGGKSFSTYSTLANEEGNIEGWNGDTGKAETYGHDGIHGKEENITANGIQGQVSIIDNAGATNRSNTNGNTDKNTQNGDVGDAGHNEDVAVVQEDGPQVAGSNNSTDNEDEIIENSCRNEGNTSEITPQINSKRNGTKEAEVTPGTGEDAGLDNSDGSPSGNGADEDEDEGSGDDEDEEAGNGKDSSNNSKGQEGQDHGKEDDHDSSIGQNSDSKEYYDPEGKEDPHNEVDGDKTSKSEENSAGIPEDNGSQRIEDTQKLNHRESKRVENRITKESETHAVGKSQDKGIEIKGPSSGNRNITKEVGKGNEGKEDKGQHGMILGKGNVKTQGEVVNIEGPGQKSEPGNKVGHSNTGSDSNSDGYDSYDFDDKSMQGDDPNSSDESNGNDDANSESDNNSSSRGDASYNSDESKDNGNGSDSKGAEDDDSDSTSDTNNSDSNGNGNNGNDDNDKSDSGKGKSDSSDSDSSDSSNSSDSSDSSDSDSSDSNSSSDSDSSDSDSSDSSDSDSSDSSNSSDSSDSSDSSDSSDSSDSSDSKSDSSKSESDSSDSDSKSDSSDSNSSDSSDNSDSSDSSNSSNSSDSSDSSDSSDSSSSSDSSNSSDSSDSSDSSNSSESSDSSDSSDSDSSDSSDSSNSNSSDSDSSNSSDSSDSSNSSDSSDSSDSSNSSDSSDSSDSSNSSDSSDSSDSSDSSDSSNSSDSNDSSNSSDSSDSSNSSDSSNSSDSSDSSDSSDSDSSNSSDSSNSSDSSDSSNSSDSSDSSDSSDGSDSDSSNRSDSSNSSDSSDSSDSSNSSDSSDSSDSNESSNSSDSSDSSNSSDSDSSDSSNSSDSSDSSNSSDSSESSNSSDNSNSSDSSNSSDSSDSSDSSNSSDSSNSSDSSNSSDSSDSNSSDSSDSSNSSDSSDSSDSSDSSDSSDSSNSSDSSDSSDSSDSSNSSDSSNSSDSSNSSDSSDSSDSSDSSDSSDSSDSSDSSNSSDSSDSSDSSDSSDSSDSSDSSDSSESSDSSDSSNSSDSSDSSDSSDSSDSSDSSDSSDSSDSSNSSDSSDSSDSSDSSDSSNSSDSSDSSESSDSSDSSDSSDSSDSSDSSDSSDSSDSSNSSDSSDSSDSSDSSDSSDSSDSSDSSDSSDSSDSSDSSDSSDSSDSSDSSDSNESSDSSDSSDSSDSSNSSDSSDSSDSSDSTSDSNDESDSQSKSGNGNNNGSDSDSDSEGSDSNHSTSDD.

The signal sequence occupies residues 1 to 15 (MKIITYFCIWAVAWA). Residues N41 and N49 are each glycosylated (N-linked (GlcNAc...) asparagine). A disordered region spans residues 55–89 (KESGVLVHEGDRGRQENTQDGHKGEGNGSKWAEVG). Residues 62 to 79 (HEGDRGRQENTQDGHKGE) show a composition bias toward basic and acidic residues. 7 N-linked (GlcNAc...) asparagine glycosylation sites follow: N81, N130, N150, N190, N191, N209, and N222. The span at 146-165 (AGATNRSNTNGNTDKNTQNG) shows a compositional bias: polar residues. The segment at 146–171 (AGATNRSNTNGNTDKNTQNGDVGDAG) is disordered. Residues 202–1301 (NSCRNEGNTS…SDSNHSTSDD (1100 aa)) are disordered. Positions 203–221 (SCRNEGNTSEITPQINSKR) are enriched in polar residues. Over residues 251–267 (ADEDEDEGSGDDEDEEA) the composition is skewed to acidic residues. S259 bears the Phosphoserine; by CK1 mark. Residues 271–280 (KDSSNNSKGQ) are compositionally biased toward polar residues. Residue N275 is glycosylated (N-linked (GlcNAc...) asparagine). Composition is skewed to basic and acidic residues over residues 281 to 293 (EGQD…DHDS) and 300 to 327 (DSKE…KSEE). Position 301 is a phosphoserine (S301). N336 carries an N-linked (GlcNAc...) asparagine glycan. The segment covering 340 to 377 (RIEDTQKLNHRESKRVENRITKESETHAVGKSQDKGIE) has biased composition (basic and acidic residues). N387 is a glycosylation site (N-linked (GlcNAc...) asparagine). The segment covering 388-404 (ITKEVGKGNEGKEDKGQ) has biased composition (basic and acidic residues). 2 stretches are compositionally biased toward low complexity: residues 439 to 452 (SNTG…GYDS) and 462 to 487 (GDDP…NSSS). Residues 488–490 (RGD) carry the Cell attachment site motif. Over residues 488–506 (RGDASYNSDESKDNGNGSD) the composition is skewed to polar residues. Low complexity predominate over residues 518–534 (TSDTNNSDSNGNGNNGN). Positions 536 to 549 (DNDKSDSGKGKSDS) are enriched in basic and acidic residues. The segment covering 555–564 (SDSSNSSDSS) has biased composition (low complexity). The segment covering 581–595 (DSSDSDSSDSSDSDS) has biased composition (acidic residues). Low complexity predominate over residues 596 to 619 (SDSSNSSDSSDSSDSSDSSDSSDS). Basic and acidic residues predominate over residues 620-642 (SDSKSDSSKSESDSSDSDSKSDS). 4 stretches are compositionally biased toward low complexity: residues 643-705 (SDSN…SDSS), 715-1264 (SSDS…STSD), 1272-1284 (QSKS…NGSD), and 1292-1301 (SDSNHSTSDD).

As to quaternary structure, interacts with FBLN7. DSP is glycosylated. In terms of tissue distribution, expressed in teeth. DPP is synthesized by odontoblast and transiently expressed by pre-ameloblasts.

Its subcellular location is the secreted. The protein localises to the extracellular space. It localises to the extracellular matrix. Functionally, DSP may be an important factor in dentinogenesis. DPP may bind high amount of calcium and facilitate initial mineralization of dentin matrix collagen as well as regulate the size and shape of the crystals. The protein is Dentin sialophosphoprotein (DSPP) of Homo sapiens (Human).